The chain runs to 273 residues: 2,3,4,5-tetrahydropyridine-2,6-dicarboxylate N-succinyltransferase (273 aa).

Substrate is bound by residues R105 and D142.

The protein belongs to the transferase hexapeptide repeat family. In terms of assembly, homotrimer.

Its subcellular location is the cytoplasm. The catalysed reaction is (S)-2,3,4,5-tetrahydrodipicolinate + succinyl-CoA + H2O = (S)-2-succinylamino-6-oxoheptanedioate + CoA. The protein operates within amino-acid biosynthesis; L-lysine biosynthesis via DAP pathway; LL-2,6-diaminopimelate from (S)-tetrahydrodipicolinate (succinylase route): step 1/3. This chain is 2,3,4,5-tetrahydropyridine-2,6-dicarboxylate N-succinyltransferase, found in Bordetella parapertussis (strain 12822 / ATCC BAA-587 / NCTC 13253).